Here is a 126-residue protein sequence, read N- to C-terminus: Aspartate 1-decarboxylase (126 aa).

Residue S25 is the Schiff-base intermediate with substrate; via pyruvic acid of the active site. A Pyruvic acid (Ser) modification is found at S25. Residue T57 coordinates substrate. Y58 acts as the Proton donor in catalysis. Residue 73–75 participates in substrate binding; it reads GAA.

It belongs to the PanD family. As to quaternary structure, heterooctamer of four alpha and four beta subunits. It depends on pyruvate as a cofactor. Post-translationally, is synthesized initially as an inactive proenzyme, which is activated by self-cleavage at a specific serine bond to produce a beta-subunit with a hydroxyl group at its C-terminus and an alpha-subunit with a pyruvoyl group at its N-terminus.

Its subcellular location is the cytoplasm. The enzyme catalyses L-aspartate + H(+) = beta-alanine + CO2. Its pathway is cofactor biosynthesis; (R)-pantothenate biosynthesis; beta-alanine from L-aspartate: step 1/1. Catalyzes the pyruvoyl-dependent decarboxylation of aspartate to produce beta-alanine. This Proteus mirabilis (strain HI4320) protein is Aspartate 1-decarboxylase.